We begin with the raw amino-acid sequence, 1230 residues long: DNA-directed RNA polymerase, mitochondrial (1230 aa).

Residues 1-41 (MSALCWGRGAAGLKRALRPCGRPGLPGKEGTAGGVCGPRRS) constitute a mitochondrion transit peptide. Disordered stretches follow at residues 18-55 (RPCG…DRRK), 95-115 (GSGD…KDAT), and 731-750 (VPAP…PHSA). Pro residues predominate over residues 732-744 (PAPPSEAPQPPEA). Positions 802-1230 (FRGRTYPCPP…QVKRSTYFFS (429 aa)) are mediates interaction with TEFM. Active-site residues include Asp922, Lys991, and Asp1151.

This sequence belongs to the phage and mitochondrial RNA polymerase family. Homodimer. Component of the mitochondrial transcription initiation complex, composed at least of TFB2M, TFAM and POLRMT. In this complex TFAM recruits POLRMT to the promoter whereas TFB2M induces structural changes in POLRMT to enable promoter opening and trapping of the DNA non-template strand. Upon metabolic stress, forms a complex composed of FOXO3, SIRT3 and mitochondrial RNA polymerase POLRMT; the complex is recruited to mtDNA in a SIRT3-dependent manner. Also forms a complex composed of FOXO3, SIRT3, TFAM and POLRMT. Interacts with TFB1M and TFB2M, leading to the stimulation of transcription. Interacts with TEFM. Interacts with MTRES1.

The protein resides in the mitochondrion. It catalyses the reaction RNA(n) + a ribonucleoside 5'-triphosphate = RNA(n+1) + diphosphate. In terms of biological role, DNA-dependent RNA polymerase catalyzes the transcription of mitochondrial DNA into RNA using the four ribonucleoside triphosphates as substrates. Component of the mitochondrial transcription initiation complex, composed at least of TFB2M, TFAM and POLRMT that is required for basal transcription of mitochondrial DNA. In this complex, TFAM recruits POLRMT to a specific promoter whereas TFB2M induces structural changes in POLRMT to enable promoter opening and trapping of the DNA non-template strand. Has DNA primase activity. Catalyzes the synthesis of short RNA primers that are necessary for the initiation of lagging-strand DNA synthesis from the origin of light-strand DNA replication (OriL). This is DNA-directed RNA polymerase, mitochondrial from Homo sapiens (Human).